The following is a 643-amino-acid chain: Protein cueball (643 aa).

Positions 1–21 are cleaved as a signal peptide; that stretch reads MMIWVPALIFLSACLLPRSNG. Residues 22-530 lie on the Extracellular side of the membrane; that stretch reads TPLEWDFAVT…VCQTPFVWTS (509 aa). N-linked (GlcNAc...) asparagine glycans are attached at residues N77 and N103. 3 LDL-receptor class B repeats span residues 116–163, 164–208, and 209–254; these read RNLF…DICR, RKLY…DQLS, and DRLF…TNDA. A glycan (N-linked (GlcNAc...) asparagine) is linked at N172. Residues 276–290 show a composition bias toward polar residues; the sequence is ATTTVRPEVESSTDG. Positions 276–303 are disordered; sequence ATTTVRPEVESSTDGTESESKQESEPVE. N312 is a glycosylation site (N-linked (GlcNAc...) asparagine). EGF-like domains lie at 363–397, 398–429, and 432–470; these read RMDQLERDHCMNGGSYISKRDLCICPAGFKGSRCE, IRECHNYCVHGTCQMSDLAYPKCYCQPGFTGE, and EVSNCAGLCLNGGHCRLGETEKDQPSCECPANFAGERCE. Cystine bridges form between C372/C385, C387/C396, C401/C410, C405/C420, C436/C446, C440/C458, and C460/C469. N-linked (GlcNAc...) asparagine glycans are attached at residues N472 and N507. Residues 531–551 form a helical membrane-spanning segment; the sequence is SVIIILVVGIVFSLLLITTII. Residues 552-643 lie on the Cytoplasmic side of the membrane; that stretch reads HGIRRLYKPK…LIHNMEDDLY (92 aa).

This sequence belongs to the cueball family.

Its subcellular location is the cell membrane. In terms of biological role, has a role in spermatogenesis and oogenesis. The polypeptide is Protein cueball (Drosophila ananassae (Fruit fly)).